Consider the following 101-residue polypeptide: MSSFKHLSVNQLVQMTEAKSVQIVDIRDGNSFNNGHIDGAFNLNNENLAHFIGQADMDRPLVVVCYHGISSQNAAQYLCEQGFDDVYSLDGGFSAWHEANA.

The Rhodanese domain occupies E17–A101. C65 (cysteine persulfide intermediate) is an active-site residue.

It belongs to the GlpE family.

The protein localises to the cytoplasm. The catalysed reaction is thiosulfate + hydrogen cyanide = thiocyanate + sulfite + 2 H(+). It carries out the reaction thiosulfate + [thioredoxin]-dithiol = [thioredoxin]-disulfide + hydrogen sulfide + sulfite + 2 H(+). Functionally, transferase that catalyzes the transfer of sulfur from thiosulfate to thiophilic acceptors such as cyanide or dithiols. May function in a CysM-independent thiosulfate assimilation pathway by catalyzing the conversion of thiosulfate to sulfite, which can then be used for L-cysteine biosynthesis. The sequence is that of Thiosulfate sulfurtransferase GlpE from Shewanella oneidensis (strain ATCC 700550 / JCM 31522 / CIP 106686 / LMG 19005 / NCIMB 14063 / MR-1).